Consider the following 132-residue polypeptide: Small ribosomal subunit protein uS11 (132 aa).

The segment at 1 to 24 (MAAQKQAARKPRRRDRKSVPVGQA) is disordered. Residues 7–16 (AARKPRRRDR) are compositionally biased toward basic residues.

The protein belongs to the universal ribosomal protein uS11 family. Part of the 30S ribosomal subunit. Interacts with proteins S7 and S18. Binds to IF-3.

Its function is as follows. Located on the platform of the 30S subunit, it bridges several disparate RNA helices of the 16S rRNA. Forms part of the Shine-Dalgarno cleft in the 70S ribosome. This is Small ribosomal subunit protein uS11 from Bifidobacterium adolescentis (strain ATCC 15703 / DSM 20083 / NCTC 11814 / E194a).